The primary structure comprises 293 residues: MPWIQLRINTNSDDAETISDLLMEEGSVSITFEDGKDTPIFEPKLGETPLWRDTVVVALFDAETDLTPTIAMLKTLPFLGENFSHKVEQIEDKDWVREWMDNFHPIQFGTRLWICPSWREIPDPTAVNVILDPGLAFGTGTHPTTALCLEWLDSLDLSDEEVIDFGCGSGILAVAALKLGAKNVTGIDIDYQAIDASRANAERNDVADKLALYLPEDQPADLKADVLVANILAGPLRELAPLIAERVKTGGKLALSGLLKEQAQEISDFYSQWFDMDAAAHKEDWSRLTGKRK.

Threonine 145, glycine 166, aspartate 188, and asparagine 230 together coordinate S-adenosyl-L-methionine.

This sequence belongs to the methyltransferase superfamily. PrmA family.

Its subcellular location is the cytoplasm. The catalysed reaction is L-lysyl-[protein] + 3 S-adenosyl-L-methionine = N(6),N(6),N(6)-trimethyl-L-lysyl-[protein] + 3 S-adenosyl-L-homocysteine + 3 H(+). Functionally, methylates ribosomal protein L11. The polypeptide is Ribosomal protein L11 methyltransferase (Shewanella baltica (strain OS223)).